Consider the following 613-residue polypeptide: Transcription factor Sp2 (613 aa).

The disordered stretch occupies residues 1–32; that stretch reads MSDPQTSMAATAAVSPSDYLQPAASTTQDSQP. The segment covering 23–32 has biased composition (polar residues); that stretch reads AASTTQDSQP. Residue S78 is modified to Phosphoserine. Disordered regions lie at residues 170 to 197 and 225 to 255; these read SPSS…AQSG and PGAA…LPAA. Positions 185 to 197 are enriched in polar residues; the sequence is QKSSTTTTPAQSG. The 9aaTAD; inactive motif lies at 361-369; sequence GEVQTVLVQ. The segment covering 374–392 has biased composition (low complexity); it reads ATAATASTTTCSSPASRAA. The segment at 374-402 is disordered; it reads ATAATASTTTCSSPASRAAHLSGTSKKHS. C2H2-type zinc fingers lie at residues 525 to 549, 555 to 579, and 585 to 607; these read HVCH…VRLH, FVCN…ARTH, and FECA…YKTH.

Belongs to the Sp1 C2H2-type zinc-finger protein family.

Its subcellular location is the nucleus. Functionally, binds to GC box promoters elements and selectively activates mRNA synthesis from genes that contain functional recognition sites. The sequence is that of Transcription factor Sp2 (SP2) from Bos taurus (Bovine).